Here is a 386-residue protein sequence, read N- to C-terminus: DNA-directed RNA polymerase subunit Rpo1C (386 aa).

This sequence belongs to the RNA polymerase beta' chain family. In terms of assembly, part of the RNA polymerase complex.

It localises to the cytoplasm. It carries out the reaction RNA(n) + a ribonucleoside 5'-triphosphate = RNA(n+1) + diphosphate. Its function is as follows. DNA-dependent RNA polymerase (RNAP) catalyzes the transcription of DNA into RNA using the four ribonucleoside triphosphates as substrates. Forms part of the jaw domain. The protein is DNA-directed RNA polymerase subunit Rpo1C of Methanococcus maripaludis (strain C6 / ATCC BAA-1332).